Consider the following 1813-residue polypeptide: Nonribosomal peptide synthetase 1 (1813 aa).

Residues 89-494 are adenylation; it reads EKARRDPSRQ…GRGDQQVKLR (406 aa). Residues 624–699 enclose the Carrier 1 domain; it reads EPQSERERQL…ELAITLKHSD (76 aa). The residue at position 660 (serine 660) is an O-(pantetheine 4'-phosphoryl)serine. The condensation 1 stretch occupies residues 738 to 1159; sequence DVYPCTTLQE…LPMTDDELAE (422 aa). The 77-residue stretch at 1282–1358 folds into the Carrier 2 domain; the sequence is QVTTPKQQKL…DMADIAKESL (77 aa). An O-(pantetheine 4'-phosphoryl)serine modification is found at serine 1319. A condensation 2 region spans residues 1427–1806; sequence FYLDAAVDQS…STLFQTDVME (380 aa).

It belongs to the NRP synthetase family.

Its pathway is siderophore biosynthesis. Functionally, nonribosomal peptide synthetase; part of the gene cluster that mediates the biosynthesis of hydroxamate-containing siderophores that play a critical role in virulence via intracellular iron acquisition during macrophage infection. This chain is Nonribosomal peptide synthetase 1, found in Ajellomyces capsulatus (Darling's disease fungus).